A 622-amino-acid polypeptide reads, in one-letter code: DNA mismatch repair protein MutL (622 aa).

Positions 399 to 414 are enriched in basic and acidic residues; sequence SSQNFHPDENDYRAEE. The interval 399 to 422 is disordered; the sequence is SSQNFHPDENDYRAEEASPAEENP.

It belongs to the DNA mismatch repair MutL/HexB family.

This protein is involved in the repair of mismatches in DNA. It is required for dam-dependent methyl-directed DNA mismatch repair. May act as a 'molecular matchmaker', a protein that promotes the formation of a stable complex between two or more DNA-binding proteins in an ATP-dependent manner without itself being part of a final effector complex. This chain is DNA mismatch repair protein MutL, found in Phocaeicola vulgatus (strain ATCC 8482 / DSM 1447 / JCM 5826 / CCUG 4940 / NBRC 14291 / NCTC 11154) (Bacteroides vulgatus).